The chain runs to 202 residues: T-cell surface glycoprotein CD3 epsilon chain (202 aa).

Residues 1–21 (MPSGSLWRVLGLCLLSVGAWG) form the signal peptide. The Extracellular portion of the chain corresponds to 22–125 (QEDNEDPLEP…NCVEVDTMTA (104 aa)). The 75-residue stretch at 33 to 107 (PQTSASARYK…TSNSLEKNYL (75 aa)) folds into the Ig-like domain. A disulfide bridge connects residues cysteine 54 and cysteine 96. The helical transmembrane segment at 126–146 (VAIVVADVCITLGFLLLVYYW) threads the bilayer. At 147–202 (SKNKKASSVTMMRGPGAGGRPRGQNKEKPPPVPNPDYEPIRKGQQDLYSGLNQRGI) the chain is on the cytoplasmic side. The interval 156–202 (TMMRGPGAGGRPRGQNKEKPPPVPNPDYEPIRKGQQDLYSGLNQRGI) is disordered. Residues 170 to 187 (QNKEKPPPVPNPDYEPIR) form an NUMB-binding region region. The region spanning 173 to 200 (EKPPPVPNPDYEPIRKGQQDLYSGLNQR) is the ITAM domain. The interval 174 to 181 (KPPPVPNP) is proline-rich sequence. A phosphotyrosine mark is found at tyrosine 183 and tyrosine 194. A compositionally biased stretch (polar residues) spans 192 to 202 (DLYSGLNQRGI).

As to quaternary structure, the TCR-CD3 complex is composed of a CD3D/CD3E and a CD3G/CD3E heterodimers that preferentially associate with TCRalpha and TCRbeta, respectively, to form TCRalpha/CD3E/CD3G and TCRbeta/CD3G/CD3E trimers. In turn, the hexamer interacts with CD3Z homodimer to form the TCR-CD3 complex. Alternatively, TCRalpha and TCRbeta can be replaced by TCRgamma and TCRdelta. Interacts with CD6. Interacts (via Proline-rich sequence) with NCK1; the interaction is ligand dependent but independent of tyrosine kinase activation. In terms of processing, phosphorylated on Tyr residues after T-cell receptor triggering by LCK in association with CD4/CD8.

It is found in the cell membrane. Functionally, part of the TCR-CD3 complex present on T-lymphocyte cell surface that plays an essential role in adaptive immune response. When antigen presenting cells (APCs) activate T-cell receptor (TCR), TCR-mediated signals are transmitted across the cell membrane by the CD3 chains CD3D, CD3E, CD3G and CD3Z. All CD3 chains contain immunoreceptor tyrosine-based activation motifs (ITAMs) in their cytoplasmic domain. Upon TCR engagement, these motifs become phosphorylated by Src family protein tyrosine kinases LCK and FYN, resulting in the activation of downstream signaling pathways. In addition of this role of signal transduction in T-cell activation, CD3E plays an essential role in correct T-cell development. Also participates in internalization and cell surface down-regulation of TCR-CD3 complexes via endocytosis sequences present in CD3E cytosolic region. In addition to its role as a TCR coreceptor, it serves as a receptor for ITPRIPL1. Ligand recognition inhibits T-cell activation by promoting interaction with NCK1, which prevents CD3E-ZAP70 interaction and blocks the ERK-NFkB signaling cascade and calcium influx. This chain is T-cell surface glycoprotein CD3 epsilon chain (CD3E), found in Felis catus (Cat).